Consider the following 104-residue polypeptide: Flagellar hook-basal body complex protein FliE (104 aa).

Belongs to the FliE family.

Its subcellular location is the bacterial flagellum basal body. This chain is Flagellar hook-basal body complex protein FliE, found in Salmonella agona (strain SL483).